The primary structure comprises 208 residues: Inosine triphosphate pyrophosphatase (208 aa).

Alanine 2 carries the N-acetylalanine modification. 14-19 (TGNAKK) contributes to the ITP binding site. Glutamate 44 is a Mg(2+) binding site. ITP-binding positions include lysine 56, 72-73 (DT), lysine 89, 149-152 (FGWD), lysine 172, and 177-178 (HR).

The protein belongs to the HAM1 NTPase family. In terms of assembly, homodimer. Mg(2+) is required as a cofactor. It depends on Mn(2+) as a cofactor.

It is found in the cytoplasm. It carries out the reaction ITP + H2O = IMP + diphosphate + H(+). It catalyses the reaction dITP + H2O = dIMP + diphosphate + H(+). The catalysed reaction is XTP + H2O = XMP + diphosphate + H(+). The enzyme catalyses N(6)-hydroxy-dATP + H2O = N(6)-hydroxy-dAMP + diphosphate + H(+). Functionally, pyrophosphatase that hydrolyzes the non-canonical purine nucleotides inosine triphosphate (ITP), deoxyinosine triphosphate (dITP) as well as 2'-deoxy-N-6-hydroxylaminopurine triphosphate (dHAPTP) and xanthosine 5'-triphosphate (XTP) to their respective monophosphate derivatives. The enzyme does not distinguish between the deoxy- and ribose forms. Probably excludes non-canonical purines from RNA and DNA precursor pools, thus preventing their incorporation into RNA and DNA and avoiding chromosomal lesions. In Bos taurus (Bovine), this protein is Inosine triphosphate pyrophosphatase.